A 549-amino-acid chain; its full sequence is Chaperonin GroEL 5 (549 aa).

ATP is bound by residues 30-33 (TLGP), Lys51, 87-91 (DGTTT), Gly415, and Asp495.

It belongs to the chaperonin (HSP60) family. In terms of assembly, forms a cylinder of 14 subunits composed of two heptameric rings stacked back-to-back. Interacts with the co-chaperonin GroES.

It is found in the cytoplasm. The catalysed reaction is ATP + H2O + a folded polypeptide = ADP + phosphate + an unfolded polypeptide.. In terms of biological role, together with its co-chaperonin GroES, plays an essential role in assisting protein folding. The GroEL-GroES system forms a nano-cage that allows encapsulation of the non-native substrate proteins and provides a physical environment optimized to promote and accelerate protein folding. The protein is Chaperonin GroEL 5 of Mesorhizobium japonicum (strain LMG 29417 / CECT 9101 / MAFF 303099) (Mesorhizobium loti (strain MAFF 303099)).